The following is a 2197-amino-acid chain: Protein Ycf2 (2197 aa).

1539-1546 (GSIGTGRS) serves as a coordination point for ATP.

The protein belongs to the Ycf2 family.

It is found in the plastid. The protein localises to the chloroplast stroma. Functionally, probable ATPase of unknown function. Its presence in a non-photosynthetic plant (Epifagus virginiana) and experiments in tobacco indicate that it has an essential function which is probably not related to photosynthesis. In Ipomoea purpurea (Common morning glory), this protein is Protein Ycf2.